Here is a 181-residue protein sequence, read N- to C-terminus: Protein GrpE (181 aa).

It belongs to the GrpE family. In terms of assembly, homodimer.

The protein resides in the cytoplasm. Participates actively in the response to hyperosmotic and heat shock by preventing the aggregation of stress-denatured proteins, in association with DnaK and GrpE. It is the nucleotide exchange factor for DnaK and may function as a thermosensor. Unfolded proteins bind initially to DnaJ; upon interaction with the DnaJ-bound protein, DnaK hydrolyzes its bound ATP, resulting in the formation of a stable complex. GrpE releases ADP from DnaK; ATP binding to DnaK triggers the release of the substrate protein, thus completing the reaction cycle. Several rounds of ATP-dependent interactions between DnaJ, DnaK and GrpE are required for fully efficient folding. The protein is Protein GrpE of Verminephrobacter eiseniae (strain EF01-2).